Consider the following 482-residue polypeptide: Keratin, type I cytoskeletal 39 (482 aa).

The interval 1–24 (MDTKGSTVTISSSTPPQNCSGNTN) is disordered. Residues 1-91 (MDTKGSTVTI…RCTEGINTHE (91 aa)) are head. The region spanning 91-402 (EKETMQILNE…SLLESLDGRL (312 aa)) is the IF rod domain. The interval 92 to 126 (KETMQILNERLANYLEKVRMLEGENADLEDKIQEA) is coil 1A. Positions 127-137 (CSKALPILCPD) are linker 1. Residues 138–238 (YLSYYTTIEE…HEEEVNSLQC (101 aa)) are coil 1B. The linker 12 stretch occupies residues 239–254 (QLGDRINIEVTAAPSV). Positions 255 to 398 (DLNQILQEMR…ATYRSLLESL (144 aa)) are coil 2. The tract at residues 399-482 (DGRLPCNPCA…PCYITRATKV (84 aa)) is tail.

This sequence belongs to the intermediate filament family. As to quaternary structure, heterotetramer of two type I and two type II keratins.

Functionally, may play a role in late hair differentiation. In Mus musculus (Mouse), this protein is Keratin, type I cytoskeletal 39 (Krt39).